Consider the following 138-residue polypeptide: Acidic phospholipase A2 VpaPLA2 (138 aa).

Residues M1–G16 form the signal peptide. 7 cysteine pairs are disulfide-bonded: C42–C131, C44–C60, C59–C111, C65–C138, C66–C104, C73–C97, and C91–C102. Ca(2+)-binding residues include Y43, G45, and G47. Residue H63 is part of the active site. Ca(2+) is bound at residue D64. D105 is an active-site residue.

Belongs to the phospholipase A2 family. Group II subfamily. D49 sub-subfamily. Requires Ca(2+) as cofactor. Expressed by the venom gland.

It is found in the secreted. It carries out the reaction a 1,2-diacyl-sn-glycero-3-phosphocholine + H2O = a 1-acyl-sn-glycero-3-phosphocholine + a fatty acid + H(+). Snake venom phospholipase A2 (PLA2) that causes a sudden decrease of arterial blood pressure when injected into rat, but is not lethal. When co-injected with an uncharacterized basic protein (which did not show any enzymatic activity, but also causes a drop in blood pressure), this synergistical mixture is lethal. PLA2 catalyzes the calcium-dependent hydrolysis of the 2-acyl groups in 3-sn-phosphoglycerides. This chain is Acidic phospholipase A2 VpaPLA2, found in Daboia palaestinae (Palestine viper).